Reading from the N-terminus, the 175-residue chain is NADH-ubiquinone oxidoreductase chain 6 (175 aa).

Transmembrane regions (helical) follow at residues 1-21, 25-45, 48-68, 88-108, and 149-169; these read MMTY…VGFS, SPIY…GIVL, GGSF…LVVF, TVLS…GYCI, and YGTW…LVVM.

This sequence belongs to the complex I subunit 6 family. Core subunit of respiratory chain NADH dehydrogenase (Complex I) which is composed of 45 different subunits.

The protein localises to the mitochondrion inner membrane. The catalysed reaction is a ubiquinone + NADH + 5 H(+)(in) = a ubiquinol + NAD(+) + 4 H(+)(out). Functionally, core subunit of the mitochondrial membrane respiratory chain NADH dehydrogenase (Complex I) which catalyzes electron transfer from NADH through the respiratory chain, using ubiquinone as an electron acceptor. Essential for the catalytic activity and assembly of complex I. The sequence is that of NADH-ubiquinone oxidoreductase chain 6 (MT-ND6) from Urotrichus talpoides (Japanese shrew mole).